The sequence spans 249 residues: MSKLVINNLDLYYGEFHALKDVNLDIEEKEITAFIGPSGCGKSTLLKSINRMNDLVKNCKITGDITLEGEDVYRQLDINQLRKKVGMVFQKPNPFPMSIYDNVAFGPRTHGIHSKAELDDIVERSLKQAALWDEVKDRLHKSALGMSGGQQQRLCIARALAIEPDVLLMDEPTSALDPISTAKIEELVIQLKKNYTIVIVTHNMQQAVRISDKTAFFLMGEVVEYNKTCQLFSLPQDERTENYITGRFG.

The ABC transporter domain occupies 4–244 (LVINNLDLYY…PQDERTENYI (241 aa)). 36–43 (GPSGCGKS) provides a ligand contact to ATP.

The protein belongs to the ABC transporter superfamily. Phosphate importer (TC 3.A.1.7) family. In terms of assembly, the complex is composed of two ATP-binding proteins (PstB), two transmembrane proteins (PstC and PstA) and a solute-binding protein (PstS).

The protein resides in the cell membrane. It catalyses the reaction phosphate(out) + ATP + H2O = ADP + 2 phosphate(in) + H(+). Functionally, part of the ABC transporter complex PstSACB involved in phosphate import. Responsible for energy coupling to the transport system. This chain is Phosphate import ATP-binding protein PstB 3, found in Streptococcus agalactiae serotype Ia (strain ATCC 27591 / A909 / CDC SS700).